A 285-amino-acid chain; its full sequence is NAD kinase (285 aa).

The active-site Proton acceptor is Asp-64. NAD(+) is bound by residues 64 to 65 (DG), 138 to 139 (ND), Arg-149, Arg-166, Asp-168, Leu-176, 179 to 184 (SGYTIS), and Gln-238.

The protein belongs to the NAD kinase family. A divalent metal cation is required as a cofactor.

It localises to the cytoplasm. It carries out the reaction NAD(+) + ATP = ADP + NADP(+) + H(+). Its function is as follows. Involved in the regulation of the intracellular balance of NAD and NADP, and is a key enzyme in the biosynthesis of NADP. Catalyzes specifically the phosphorylation on 2'-hydroxyl of the adenosine moiety of NAD to yield NADP. The protein is NAD kinase of Lawsonia intracellularis (strain PHE/MN1-00).